We begin with the raw amino-acid sequence, 302 residues long: Urease accessory protein UreD 1 (302 aa).

It belongs to the UreD family. In terms of assembly, ureD, UreF and UreG form a complex that acts as a GTP-hydrolysis-dependent molecular chaperone, activating the urease apoprotein by helping to assemble the nickel containing metallocenter of UreC. The UreE protein probably delivers the nickel.

The protein localises to the cytoplasm. Required for maturation of urease via the functional incorporation of the urease nickel metallocenter. The polypeptide is Urease accessory protein UreD 1 (Psychrobacter cryohalolentis (strain ATCC BAA-1226 / DSM 17306 / VKM B-2378 / K5)).